The primary structure comprises 330 residues: Global transcription regulator sge1 (330 aa).

Disordered regions lie at residues 93–123 and 239–306; these read PPGEKKRARGRNGKSTTQSGGITKSRPRNSV and QYAP…HQPQ. The span at 105 to 114 shows a compositional bias: polar residues; the sequence is GKSTTQSGGI. Positions 250-306 are enriched in low complexity; the sequence is QQPALQQQPQQQPQPQHQPQLQYQPQPHQHQPQLQYQPQQQHQPQQQYRPQPQHQPQ.

It belongs to the MIT1/WOR1 family.

It is found in the nucleus. Global transcriptional regulator of pathogenicity. Acts as an activator of parasitic growth. Not essential for colonization or penetration of the root surface, but required for expression of genes encoding effectors that are secreted during infection. Involved in conidiogenesis, but is not required for conidial fitness, overall (colony) morphology, vegetative growth or carbon source utilization. This Fusarium oxysporum f. sp. lycopersici (strain 4287 / CBS 123668 / FGSC 9935 / NRRL 34936) (Fusarium vascular wilt of tomato) protein is Global transcription regulator sge1.